The primary structure comprises 397 residues: Lysophospholipid transporter LplT (397 aa).

The Periplasmic portion of the chain corresponds to 1–17 (MSESVHTNTSLWSKGMK). Residues 18 to 38 (AVIVAQFLSAFGDNALLFATL) traverse the membrane as a helical segment. At 39–52 (ALLKAQFYPEWSQP) the chain is on the cytoplasmic side. The helical transmembrane segment at 53 to 73 (ILQMVFVGAYILFAPFVGQVA) threads the bilayer. Over 74–90 (DSFAKGRVMMFANGLKL) the chain is Periplasmic. Residues 91–111 (LGAASICFGINPFLGYTLVGV) form a helical membrane-spanning segment. Residues 112–144 (GAAAYSPAKYGILGELTTGSKLVKANGLMEAST) lie on the Cytoplasmic side of the membrane. The chain crosses the membrane as a helical span at residues 145–165 (IAAILLGSVAGGVLADWHVLV). Ala166 is a topological domain (periplasmic). Residues 167–187 (LAACALAYGGAVVANIYIPKL) form a helical membrane-spanning segment. Over 188–226 (AAARPGQSWNLINMTRSFLNACTSLWRNGETRFSLVGTS) the chain is Cytoplasmic. Residues 227 to 247 (LFWGAGVTLRFLLVLWVPVAL) traverse the membrane as a helical segment. Over 248 to 256 (GITDNATPT) the chain is Periplasmic. The chain crosses the membrane as a helical span at residues 257–277 (YLNAMVAIGIVVGAGAAAKLV). At 278 to 280 (TLE) the chain is on the cytoplasmic side. Residues 281 to 301 (TVSRCMPAGILIGVVVLIFSL) traverse the membrane as a helical segment. At 302–304 (QHE) the chain is on the periplasmic side. The chain crosses the membrane as a helical span at residues 305–325 (LLPAYALLMLIGVLGGFFVVP). Residues 326 to 343 (LNALLQERGKKSVGAGNA) are Cytoplasmic-facing. Residues 344 to 364 (IAVQNLGENSAMLLMLGIYSL) form a helical membrane-spanning segment. Residues 365-366 (AV) are Periplasmic-facing. The chain crosses the membrane as a helical span at residues 367–387 (MVGIPVVPIGIGFGALFALAI). Over 388–397 (TALWIWQRRY) the chain is Cytoplasmic.

The protein belongs to the major facilitator superfamily. LplT (TC 2.A.1.42) family.

Its subcellular location is the cell inner membrane. Catalyzes the facilitated diffusion of 2-acyl-glycero-3-phosphoethanolamine (2-acyl-GPE) into the cell. The chain is Lysophospholipid transporter LplT from Escherichia coli O127:H6 (strain E2348/69 / EPEC).